The primary structure comprises 681 residues: Pentatricopeptide repeat-containing protein At2g22410, mitochondrial (681 aa).

Residues 1 to 32 (MNISKAKLLLLPPPLTPKLNRSLYSHSQRRTR) constitute a mitochondrion transit peptide. PPR repeat units lie at residues 117 to 151 (NIFS…GCCE), 155 to 189 (DHFT…RLEL), 190 to 220 (VSHV…SPVR), 221 to 255 (DLVS…GVKP), 256 to 290 (DDVT…GLRM), 291 to 321 (TIPL…LEKR), 322 to 356 (TIVS…DVVL), 357 to 387 (WNAM…NTKP), 388 to 422 (DEIT…SLSL), 423 to 453 (NVAL…IQTR), 454 to 488 (NSLT…GIAP), 489 to 519 (DEIT…MKSR), and 525 to 555 (QLKH…MPME). The interval 560–635 (VWGALLFGCR…IPGCSSIEVN (76 aa)) is type E motif. A type E(+) motif region spans residues 636–666 (GIVCEFIVRDKSRPESEKIYDRLHCLGRHMR).

This sequence belongs to the PPR family. PCMP-E subfamily.

The protein localises to the mitochondrion. This is Pentatricopeptide repeat-containing protein At2g22410, mitochondrial (PCMP-E28) from Arabidopsis thaliana (Mouse-ear cress).